We begin with the raw amino-acid sequence, 360 residues long: Phospho-N-acetylmuramoyl-pentapeptide-transferase (360 aa).

Helical transmembrane passes span 21–41 (YVTF…LWWG), 74–94 (MGGL…GDLG), 97–117 (YVWV…IDDY), 134–154 (YILQ…SAGS), 168–188 (VMPQ…VGSS), 199–219 (GLAI…AYLS), 236–256 (SGEL…FLWF), 263–283 (VFMG…IAVL), 288–308 (ILLV…ILQV), and 338–358 (VIVR…ATLK).

It belongs to the glycosyltransferase 4 family. MraY subfamily. Mg(2+) is required as a cofactor.

The protein resides in the cell inner membrane. It catalyses the reaction UDP-N-acetyl-alpha-D-muramoyl-L-alanyl-gamma-D-glutamyl-meso-2,6-diaminopimeloyl-D-alanyl-D-alanine + di-trans,octa-cis-undecaprenyl phosphate = di-trans,octa-cis-undecaprenyl diphospho-N-acetyl-alpha-D-muramoyl-L-alanyl-D-glutamyl-meso-2,6-diaminopimeloyl-D-alanyl-D-alanine + UMP. It participates in cell wall biogenesis; peptidoglycan biosynthesis. Catalyzes the initial step of the lipid cycle reactions in the biosynthesis of the cell wall peptidoglycan: transfers peptidoglycan precursor phospho-MurNAc-pentapeptide from UDP-MurNAc-pentapeptide onto the lipid carrier undecaprenyl phosphate, yielding undecaprenyl-pyrophosphoryl-MurNAc-pentapeptide, known as lipid I. This is Phospho-N-acetylmuramoyl-pentapeptide-transferase from Shewanella loihica (strain ATCC BAA-1088 / PV-4).